The chain runs to 218 residues: Probable GTP-binding protein EngB (218 aa).

The 172-residue stretch at 21–192 (NAPQIALAGR…WQELHRLAFP (172 aa)) folds into the EngB-type G domain. GTP-binding positions include 29-36 (GRSNVGKS), 56-60 (GKTRS), 75-78 (DLPG), 142-145 (TKAD), and 171-173 (FSS). Residues serine 36 and threonine 58 each contribute to the Mg(2+) site. A disordered region spans residues 194-218 (MAFDTPSDGAPEPADEPEAASERAE).

The protein belongs to the TRAFAC class TrmE-Era-EngA-EngB-Septin-like GTPase superfamily. EngB GTPase family. Mg(2+) is required as a cofactor.

Functionally, necessary for normal cell division and for the maintenance of normal septation. The chain is Probable GTP-binding protein EngB from Oleidesulfovibrio alaskensis (strain ATCC BAA-1058 / DSM 17464 / G20) (Desulfovibrio alaskensis).